Reading from the N-terminus, the 510-residue chain is Lysine--tRNA ligase (510 aa).

Mg(2+) contacts are provided by glutamate 420 and glutamate 427.

This sequence belongs to the class-II aminoacyl-tRNA synthetase family. In terms of assembly, homodimer. Mg(2+) serves as cofactor.

It localises to the cytoplasm. The enzyme catalyses tRNA(Lys) + L-lysine + ATP = L-lysyl-tRNA(Lys) + AMP + diphosphate. In Vibrio cholerae serotype O1 (strain ATCC 39315 / El Tor Inaba N16961), this protein is Lysine--tRNA ligase (lysS).